A 59-amino-acid chain; its full sequence is Conotoxin ViVB (59 aa).

Residues 1–22 (MRCVPVFIILLLLIPSAPSAAV) form the signal peptide. Residues 23-46 (QPKTEKDDVPLASFHDSAMRILSR) constitute a propeptide that is removed on maturation. At Q47 the chain carries Pyrrolidone carboxylic acid. Residue V58 is modified to Valine amide.

Contains 2 disulfide bonds that can be either 'C1-C3, C2-C4' or 'C1-C4, C2-C3', since these disulfide connectivities have been observed for conotoxins with cysteine framework V (for examples, see AC P0DQQ7 and AC P81755). As to expression, expressed by the venom duct.

It is found in the secreted. The polypeptide is Conotoxin ViVB (Conus virgo (Virgin cone)).